The primary structure comprises 1722 residues: Signal-induced proliferation-associated 1-like protein 2 (1722 aa).

The span at 1–12 (MSDPRQSQEEKH) shows a compositional bias: basic and acidic residues. 2 disordered regions span residues 1-29 (MSDP…RIMQ) and 42-72 (NGNM…PAVP). Over residues 45–56 (MGPTTSLNASNS) the composition is skewed to polar residues. Ser-148 carries the post-translational modification Phosphoserine. Polar residues predominate over residues 360–377 (GASAASQTQMPTGQTGNC). Residues 360-401 (GASAASQTQMPTGQTGNCESPLGSKEDLNSKENLDADEGDGK) are disordered. Ser-379 and Ser-383 each carry phosphoserine. Residues 383-401 (SKEDLNSKENLDADEGDGK) are compositionally biased toward basic and acidic residues. A Rap-GAP domain is found at 595–812 (LLKLDEQGLS…RTRQEYLKDL (218 aa)). One can recognise a PDZ domain in the interval 950-1026 (EMTLRRNGLG…VKVVIIQPHD (77 aa)). At Ser-1029 the chain carries Phosphoserine. 2 disordered regions span residues 1067 to 1245 (HRVP…FGSG) and 1330 to 1360 (EGSM…SKSS). 2 stretches are compositionally biased toward low complexity: residues 1093 to 1102 (QQLLQQAQAA) and 1119 to 1130 (SSPSNQSSSSDP). Composition is skewed to basic and acidic residues over residues 1164 to 1183 (DGAR…ETKW) and 1194 to 1217 (YKER…HIGD). Residues 1219–1236 (SCSSHSSSNTLSSNTSSN) show a composition bias toward low complexity. Ser-1244 is subject to Phosphoserine. Positions 1337-1360 (SEISSHSSGSHHSGSPSAHCSKSS) are enriched in low complexity. Phosphoserine occurs at positions 1461, 1472, 1478, 1488, 1549, 1552, and 1591. Positions 1654 to 1712 (LTGKVNQLELILRQLQTDLRKEKQDKAVLQAEVQHLRQDNMRLQEESQTATAQLRKFTE) form a coiled coil.

This chain is Signal-induced proliferation-associated 1-like protein 2 (SIPA1L2), found in Homo sapiens (Human).